A 156-amino-acid chain; its full sequence is Small ribosomal subunit protein uS7 (156 aa).

It belongs to the universal ribosomal protein uS7 family. In terms of assembly, part of the 30S ribosomal subunit. Contacts proteins S9 and S11.

Its function is as follows. One of the primary rRNA binding proteins, it binds directly to 16S rRNA where it nucleates assembly of the head domain of the 30S subunit. Is located at the subunit interface close to the decoding center, probably blocks exit of the E-site tRNA. The polypeptide is Small ribosomal subunit protein uS7 (Phytoplasma australiense).